We begin with the raw amino-acid sequence, 325 residues long: Polyprenyl transferase mpaA (325 aa).

A run of 3 helical transmembrane segments spans residues 27-47, 56-76, and 108-128; these read MPYYTMMAAVWSTLIAGALKL, VEYILFKAGLCFVHCLLLCGA, and VEALVWMVGQYFLSVKMLDLI. Asparagine 131 carries N-linked (GlcNAc...) asparagine glycosylation. A run of 6 helical transmembrane segments spans residues 134–151, 159–179, 192–212, 240–260, 262–282, and 295–315; these read IWGLMLPLTASIMLYPYL, VFIYPQYILGLAVAYPSITGW, IFTHCTPICLLIFFWCLYFNT, LFLAFLGALPLAVIPYVVLKI, SPWLWFSWMAVWTVSIVMQIV, and IHWDNFLLGLWTTVACIVEVG.

Belongs to the UbiA prenyltransferase family. Mg(2+) is required as a cofactor.

It localises to the golgi apparatus membrane. The enzyme catalyses 5,7-dihydroxy-4-methylphthalide + (2E,6E)-farnesyl diphosphate = 4-farnesyl-3,5-dihydroxy-6-methylphthalide + diphosphate. It functions in the pathway secondary metabolite biosynthesis; terpenoid biosynthesis. Its function is as follows. Polyprenyl transferase; part of the gene cluster that mediates the biosynthesis of mycophenolic acid (MPA), the first isolated antibiotic natural product in the world obtained from a culture of Penicillium brevicompactum in 1893. MpaA is a Golgi apparatus-associated enzyme that catalyzes the prenylation of 5,7-dihydroxy-4,6-dimethylphthalide (DHMP) to yield farnesyl-DHMP (FDHMP). The first step of the pathway is the synthesis of 5-methylorsellinic acid (5MOA) by the cytosolic polyketide synthase mpaC. 5MOA is then converted to the phthalide compound 5,7-dihydroxy-4,6-dimethylphthalide (DHMP) by the endoplasmic reticulum-bound cytochrome P450 monooxygenase mpaDE. MpaDE first catalyzes hydroxylation of 5-MOA to 4,6-dihydroxy-2-(hydroxymethyl)-3-methylbenzoic acid (DHMB). MpaDE then acts as a lactone synthase that catalyzes the ring closure to convert DHMB into DHMP. The next step is the prenylation of DHMP by the Golgi apparatus-associated prenyltransferase mpaA to yield farnesyl-DHMP (FDHMP). The ER-bound oxygenase mpaB then mediates the oxidative cleavage the C19-C20 double bond in FDHMP to yield FDHMP-3C via a mycophenolic aldehyde intermediate. The O-methyltransferase mpaG catalyzes the methylation of FDHMP-3C to yield MFDHMP-3C. After the cytosolic methylation of FDHMP-3C, MFDHMP-3C enters into peroxisomes probably via free diffusion due to its low molecular weight. Upon a peroxisomal CoA ligation reaction, catalyzed by a beta-oxidation component enzyme acyl-CoA ligase ACL891, MFDHMP-3C-CoA would then be restricted to peroxisomes for the following beta-oxidation pathway steps. The peroxisomal beta-oxidation machinery than converts MFDHMP-3C-CoA into MPA_CoA, via a beta-oxidation chain-shortening process. Finally mpaH acts as a peroxisomal acyl-CoA hydrolase with high substrate specificity toward MPA-CoA to release the final product MPA. This Penicillium roqueforti (strain FM164) protein is Polyprenyl transferase mpaA.